A 578-amino-acid chain; its full sequence is Zinc finger-containing ubiquitin peptidase 1 (578 aa).

Residues L2 to H24 form a C2H2-type 1 zinc finger. The segment at I29–H52 adopts a C2H2-type 2; atypical zinc-finger fold. 2 C2H2-type zinc fingers span residues P154–H177 and Y193–H215. Positions D226 to R248 are MIU. Residues R249–G274 are zUBD/ZHA. Residue K262 is modified to N6-acetyllysine. The active-site Nucleophile is the C360. The active-site Proton acceptor is the H491. D512 is an active-site residue.

The protein belongs to the peptidase C78 family. ZUFSP subfamily. As to quaternary structure, interacts with RPA1 and RPA2.

The protein localises to the cytoplasm. It is found in the nucleus. It carries out the reaction Thiol-dependent hydrolysis of ester, thioester, amide, peptide and isopeptide bonds formed by the C-terminal Gly of ubiquitin (a 76-residue protein attached to proteins as an intracellular targeting signal).. Deubiquitinase with endodeubiquitinase activity that specifically interacts with and cleaves 'Lys-63'-linked long polyubiquitin chains. Shows only weak activity against 'Lys-11' and 'Lys-48'-linked chains. Plays an important role in genome stability pathways, functioning to prevent spontaneous DNA damage and also promote cellular survival in response to exogenous DNA damage. Modulates the ubiquitination status of replication protein A (RPA) complex proteins in response to replication stress. The sequence is that of Zinc finger-containing ubiquitin peptidase 1 from Macaca fascicularis (Crab-eating macaque).